We begin with the raw amino-acid sequence, 624 residues long: Ferredoxin-fold anticodon-binding domain-containing protein 1 (624 aa).

Positions 531 to 624 (LYPPCYVHDV…IQQHLYVIPR (94 aa)) constitute an FDX-ACB domain.

In Homo sapiens (Human), this protein is Ferredoxin-fold anticodon-binding domain-containing protein 1 (FDXACB1).